Here is a 379-residue protein sequence, read N- to C-terminus: Alcohol dehydrogenase class-2 isozyme 1 (379 aa).

7 residues coordinate Zn(2+): cysteine 47, histidine 69, cysteine 99, cysteine 102, cysteine 105, cysteine 113, and cysteine 176. Residues 205–210 (GLGGVG), aspartate 229, lysine 234, 298–300 (VGV), and arginine 374 contribute to the NAD(+) site.

The protein belongs to the zinc-containing alcohol dehydrogenase family. Class-II subfamily. In terms of assembly, homodimer. Zn(2+) is required as a cofactor.

The protein resides in the cytoplasm. The catalysed reaction is a primary alcohol + NAD(+) = an aldehyde + NADH + H(+). It carries out the reaction a secondary alcohol + NAD(+) = a ketone + NADH + H(+). The chain is Alcohol dehydrogenase class-2 isozyme 1 (ADH2-1) from Oryctolagus cuniculus (Rabbit).